The sequence spans 397 residues: Cephalotocin receptor 1 (397 aa).

Topologically, residues 1–48 are extracellular; it reads MRYITTHPNEISTQIWNNFSSTEIWSNFSAAKNETQPIRRNQDLANAE. N-linked (GlcNAc...) asparagine glycans are attached at residues asparagine 18, asparagine 27, and asparagine 33. A helical membrane pass occupies residues 49–69; sequence VITLAVVIIITVIGNSIVLIT. At 70-91 the chain is on the cytoplasmic side; that stretch reads LFQRRKKLTRMHLFILHLSVTD. The chain crosses the membrane as a helical span at residues 92–112; it reads LFVAFFNNLPQMIWDITFLFL. At 113 to 120 the chain is on the extracellular side; the sequence is GTDLLCRL. A disulfide bond links cysteine 118 and cysteine 194. Residues 121 to 141 traverse the membrane as a helical segment; that stretch reads VTYLQSVAMYASSYVLVATAI. Over 142–162 the chain is Cytoplasmic; the sequence is DRYFAICHPLSSHKWTTARVH. The chain crosses the membrane as a helical span at residues 163 to 183; the sequence is VMVFIAWMLSFLFSTPQLFIW. At 184 to 205 the chain is on the extracellular side; the sequence is SMQFSNIGLTCQATFDPEWTLK. Residues 206-226 form a helical membrane-spanning segment; it reads FYITWLTVAIWILPTIALTLF. The Cytoplasmic portion of the chain corresponds to 227 to 293; sequence YGMMCFAVWK…RGISRAKVRS (67 aa). The helical transmembrane segment at 294–314 threads the bilayer; sequence VALTLSVVACCFICWSPFFVC. The Extracellular portion of the chain corresponds to 315 to 331; the sequence is QMWAAWDENAPYSGAIY. The chain crosses the membrane as a helical span at residues 332-352; that stretch reads TILLLLSSLNSCTNPWIYMIF. Over 353-397 the chain is Cytoplasmic; it reads SVFQHRAKTSRFVNDEETTSVTVLSSRNDIRLMSMKKKLEQTARN.

Belongs to the G-protein coupled receptor 1 family. Vasopressin/oxytocin receptor subfamily. Present in brain, buccal ganglion, gastric ganglion, olfactory lube, peduncle lobe, optical lobe, pancreas, the oviduct and the ovary.

The protein resides in the cell membrane. Its function is as follows. Acts as a receptor for cephalotocin. This chain is Cephalotocin receptor 1, found in Octopus vulgaris (Common octopus).